A 647-amino-acid chain; its full sequence is tRNA 5-methylaminomethyl-2-thiouridine biosynthesis bifunctional protein MnmC (647 aa).

The segment at 1–227 is tRNA (mnm(5)s(2)U34)-methyltransferase; the sequence is MLTWKNNLTP…KREMLIGSYS (227 aa). Positions 256–647 are FAD-dependent cmnm(5)s(2)U34 oxidoreductase; sequence VGAGIAGTTL…ARFLYRKVRK (392 aa).

This sequence in the N-terminal section; belongs to the methyltransferase superfamily. tRNA (mnm(5)s(2)U34)-methyltransferase family. The protein in the C-terminal section; belongs to the DAO family. The cofactor is FAD.

Its subcellular location is the cytoplasm. It carries out the reaction 5-aminomethyl-2-thiouridine(34) in tRNA + S-adenosyl-L-methionine = 5-methylaminomethyl-2-thiouridine(34) in tRNA + S-adenosyl-L-homocysteine + H(+). In terms of biological role, catalyzes the last two steps in the biosynthesis of 5-methylaminomethyl-2-thiouridine (mnm(5)s(2)U) at the wobble position (U34) in tRNA. Catalyzes the FAD-dependent demodification of cmnm(5)s(2)U34 to nm(5)s(2)U34, followed by the transfer of a methyl group from S-adenosyl-L-methionine to nm(5)s(2)U34, to form mnm(5)s(2)U34. This chain is tRNA 5-methylaminomethyl-2-thiouridine biosynthesis bifunctional protein MnmC, found in Leptospira interrogans serogroup Icterohaemorrhagiae serovar copenhageni (strain Fiocruz L1-130).